The sequence spans 168 residues: Protein-export protein SecB (168 aa).

It belongs to the SecB family. Homotetramer, a dimer of dimers. One homotetramer interacts with 1 SecA dimer.

Its subcellular location is the cytoplasm. Functionally, one of the proteins required for the normal export of preproteins out of the cell cytoplasm. It is a molecular chaperone that binds to a subset of precursor proteins, maintaining them in a translocation-competent state. It also specifically binds to its receptor SecA. The chain is Protein-export protein SecB from Sinorhizobium medicae (strain WSM419) (Ensifer medicae).